A 664-amino-acid chain; its full sequence is Protein-arginine deiminase type-3 (664 aa).

This sequence belongs to the protein arginine deiminase family. Ca(2+) serves as cofactor. Hair follicles, and epidermis at very low levels.

It localises to the cytoplasm. The catalysed reaction is L-arginyl-[protein] + H2O = L-citrullyl-[protein] + NH4(+). Catalyzes the deimination of arginine residues of proteins. In Homo sapiens (Human), this protein is Protein-arginine deiminase type-3 (PADI3).